A 557-amino-acid polypeptide reads, in one-letter code: Ribonuclease J 2 (557 aa).

Zn(2+) is bound by residues His-76, His-78, His-144, and Glu-166. 366–370 contacts substrate; sequence HASSH.

The protein belongs to the metallo-beta-lactamase superfamily. RNA-metabolizing metallo-beta-lactamase-like family. Bacterial RNase J subfamily. Homodimer. Component of a possible RNA degradosome complex composed of cshA, eno, pfkA, pnp, rnjA, rnjB, rnpA and rny. Interacts specifically with RNase J1. Zn(2+) is required as a cofactor.

Its subcellular location is the cytoplasm. An RNase that has 5'-3' exonuclease and endonuclease activity, with the exonuclease activity probably being most important in vivo. Involved in maturation of 16S rRNA, rnpB (the RNA component of RNase P) maturation and degradation, and mRNA maturation and/or decay. This subunit probably plays a structural rather than enzymatic role as mutation of its putative active site gives no phenotype, and its deletion is partially complemented by inactive RNase J1. The protein is Ribonuclease J 2 of Staphylococcus aureus (strain NCTC 8325 / PS 47).